The sequence spans 193 residues: Mediator of RNA polymerase II transcription subunit 20 (193 aa).

This sequence belongs to the Mediator complex subunit 20 family. In terms of assembly, component of the Mediator complex.

Its subcellular location is the nucleus. Its function is as follows. Component of the Mediator complex, a coactivator involved in the regulated transcription of nearly all RNA polymerase II-dependent genes. Mediator functions as a bridge to convey information from gene-specific regulatory proteins to the basal RNA polymerase II transcription machinery. The Mediator complex, having a compact conformation in its free form, is recruited to promoters by direct interactions with regulatory proteins and serves for the assembly of a functional preinitiation complex with RNA polymerase II and the general transcription factors. The sequence is that of Mediator of RNA polymerase II transcription subunit 20 (med20) from Schizosaccharomyces pombe (strain 972 / ATCC 24843) (Fission yeast).